We begin with the raw amino-acid sequence, 478 residues long: Adenylosuccinate lyase (478 aa).

Residues 14 to 15 (RY), 81 to 83 (KHD), and 107 to 108 (TS) contribute to the substrate site. Residue His155 is the Proton donor/acceptor of the active site. Position 237 (Gln237) interacts with substrate. Residue Ser285 is the Proton donor/acceptor of the active site. Positions 299, 325, 330, and 334 each coordinate substrate.

It belongs to the lyase 1 family. Adenylosuccinate lyase subfamily. In terms of assembly, homotetramer. Residues from neighboring subunits contribute catalytic and substrate-binding residues to each active site.

The catalysed reaction is N(6)-(1,2-dicarboxyethyl)-AMP = fumarate + AMP. The enzyme catalyses (2S)-2-[5-amino-1-(5-phospho-beta-D-ribosyl)imidazole-4-carboxamido]succinate = 5-amino-1-(5-phospho-beta-D-ribosyl)imidazole-4-carboxamide + fumarate. The protein operates within purine metabolism; AMP biosynthesis via de novo pathway; AMP from IMP: step 2/2. It functions in the pathway purine metabolism; IMP biosynthesis via de novo pathway; 5-amino-1-(5-phospho-D-ribosyl)imidazole-4-carboxamide from 5-amino-1-(5-phospho-D-ribosyl)imidazole-4-carboxylate: step 2/2. Its function is as follows. Catalyzes two non-sequential steps in de novo AMP synthesis: converts (S)-2-(5-amino-1-(5-phospho-D-ribosyl)imidazole-4-carboxamido)succinate (SAICAR) to fumarate plus 5-amino-1-(5-phospho-D-ribosyl)imidazole-4-carboxamide, and thereby also contributes to de novo IMP synthesis, and converts succinyladenosine monophosphate (SAMP) to AMP and fumarate. The chain is Adenylosuccinate lyase from Caenorhabditis briggsae.